Consider the following 473-residue polypeptide: MTNQQEQHIAIFTTASIPWLTGTAVNPLFRAAYLANDGERRVTLVIPWLTLKHQKLVYPNSITFSSPSEQEAYVRQWLEERVSFRLAFEIRFYPGKFAIDKRSILPVGDISDAIPDEEADIAVLEEPEHLTWFHHGQKWKTKFNYVIGIVHTNYLEYVKREKQGRVKAFFLKYLNSWVVGIYCHKVIRLSAATQEYPKSIVCNVHGVNPKFLEIGLRKLEQQKLQEQPFTKGAYYIGKMVWSKGYKELLKLLEKHQKELAELEVDLYGDGEDSEEIKEAARKLDLTVNVYPGRDHADSLFHNYKVFLNPSTTDVVCTTTAEALAMGKIVVCANHISNKFFKQFPNCRTYDDGQGFVRATLKALGEQPSQLTEQQRHELSWEAATQRFIKVSDLNRLSRADSNLSKRSVFASSSISVGKNLEDMSAYIHFLASGFEASRTAFGAIPGSLQPDEELCRDLGLSLNTPSPNTRKQD.

Interaction with the membrane lipid bilayer stretches follow at residues 130–148 (LTWF…YVIG) and 227–245 (QPFT…SKGY).

Belongs to the glycosyltransferase group 1 family. Glycosyltransferase 4 subfamily. In terms of tissue distribution, expressed in leaves, flowers and roots, but not in stems and siliques.

It is found in the plastid. It localises to the chloroplast outer membrane. The catalysed reaction is a 1,2-diacyl-3-O-(beta-D-galactosyl)-sn-glycerol + UDP-alpha-D-galactose = a 1,2-diacyl-3-O-[alpha-D-galactosyl-(1-&gt;6)-beta-D-galactosyl]-sn-glycerol + UDP + H(+). Its activity is regulated as follows. Stimulated by anionic phospholipids. Involved in the synthesis of diacylglycerol galactolipids that are specifically found in thylakoid membranes. Specific for alpha-glycosidic linkages. During phosphate shortage, involved in the biosynthesis of digalactosyldiacylglycerol (DGDG) which rescues the limitation of phospholipids. This Arabidopsis thaliana (Mouse-ear cress) protein is Digalactosyldiacylglycerol synthase 2, chloroplastic.